A 237-amino-acid polypeptide reads, in one-letter code: Class B acid phosphatase (237 aa).

The signal sequence occupies residues methionine 1 to alanine 23. Aspartate 69 acts as the Nucleophile in catalysis. Residues aspartate 69 and aspartate 71 each coordinate Mg(2+). Aspartate 71 serves as the catalytic Proton donor. Substrate-binding positions include threonine 137 to glycine 138 and lysine 177. Aspartate 192 serves as a coordination point for Mg(2+).

It belongs to the class B bacterial acid phosphatase family. In terms of assembly, homotetramer. Mg(2+) serves as cofactor.

Its subcellular location is the periplasm. The enzyme catalyses a phosphate monoester + H2O = an alcohol + phosphate. Its function is as follows. Dephosphorylates several organic phosphate monoesters. Also has a phosphotransferase activity catalyzing the transfer of low-energy phosphate groups from organic phosphate monoesters to free hydroxyl groups of various organic compounds. The sequence is that of Class B acid phosphatase from Salmonella arizonae (strain ATCC BAA-731 / CDC346-86 / RSK2980).